Here is an 82-residue protein sequence, read N- to C-terminus: Conotoxin Cal30 (82 aa).

Residues Met1–Ser19 form the signal peptide.

In terms of processing, may contain 5 disulfide bonds. As to expression, expressed by the venom duct.

The protein resides in the secreted. In terms of biological role, probable neurotoxin. The protein is Conotoxin Cal30 of Californiconus californicus (California cone).